Consider the following 262-residue polypeptide: Cyclin-dependent kinase inhibitor 1 (262 aa).

The interval 140–212 is disordered; the sequence is SDVAEAGSEH…SAQQATRPKI (73 aa). The segment covering 160–169 has biased composition (basic and acidic residues); it reads SGRDRERRET. Residues 198 to 208 show a composition bias toward low complexity; sequence SAATASAQQAT.

It belongs to the CDI family. ICK/KRP subfamily.

The sequence is that of Cyclin-dependent kinase inhibitor 1 (KRP1) from Oryza sativa subsp. indica (Rice).